Here is a 138-residue protein sequence, read N- to C-terminus: MRTLWIVAVLLLGVEGNLWQFEMLIMKIAKTSGFLFYSSYGCYCGWGGHGRPQDATDRCCFVHDCCYGKVTGCNPKTDSYTYSEENGDVVCGGDDPCKKQICECDRVAATCFRDNKDTYDNKYWFYPAKNCQEESEPC.

The first 16 residues, 1–16 (MRTLWIVAVLLLGVEG), serve as a signal peptide directing secretion. 7 cysteine pairs are disulfide-bonded: Cys42-Cys131, Cys44-Cys60, Cys59-Cys111, Cys65-Cys138, Cys66-Cys104, Cys73-Cys97, and Cys91-Cys102. 3 residues coordinate Ca(2+): Tyr43, Gly45, and Gly47. His63 is a catalytic residue. Asp64 serves as a coordination point for Ca(2+). The active site involves Asp105.

Belongs to the phospholipase A2 family. Group II subfamily. D49 sub-subfamily. Requires Ca(2+) as cofactor. As to expression, expressed by the venom gland.

The protein localises to the secreted. It catalyses the reaction a 1,2-diacyl-sn-glycero-3-phosphocholine + H2O = a 1-acyl-sn-glycero-3-phosphocholine + a fatty acid + H(+). Snake venom phospholipase A2 (PLA2) that inhibits ADP- and collagen-induced platelet aggregation, has edema-inducing, anti-coagulant activity, antibacterial activity, and cytotoxic activity. In vivo, has a hypotensive effect. PLA2 catalyzes the calcium-dependent hydrolysis of the 2-acyl groups in 3-sn-phosphoglycerides. This is Acidic phospholipase A2 BmooPLA2 from Bothrops moojeni (Lance-headed viper).